The chain runs to 546 residues: Phosphoglucomutase (546 aa).

Catalysis depends on S135, which acts as the Phosphoserine intermediate. Mg(2+) contacts are provided by S135, D288, D290, and D292.

Belongs to the phosphohexose mutase family. The cofactor is Mg(2+).

It catalyses the reaction alpha-D-glucose 1-phosphate = alpha-D-glucose 6-phosphate. It participates in glycolipid metabolism; diglucosyl-diacylglycerol biosynthesis. Catalyzes the interconversion between glucose-6-phosphate and alpha-glucose-1-phosphate. This is the first step in the biosynthesis of diglucosyl-diacylglycerol (Glc2-DAG), i.e. a glycolipid found in the membrane, which is also used as a membrane anchor for lipoteichoic acid (LTA). This Staphylococcus epidermidis (strain ATCC 35984 / DSM 28319 / BCRC 17069 / CCUG 31568 / BM 3577 / RP62A) protein is Phosphoglucomutase (pgcA).